The chain runs to 423 residues: Immunity-related GTPase family M protein 3 (423 aa).

Residues 83-260 (YRVKIAVTGD…PELRNTLQKD (178 aa)) enclose the IRG-type G domain. GTP contacts are provided by residues 92–99 (DSGNGMSS), 117–121 (TGVVR), and 200–202 (KLD).

It belongs to the TRAFAC class dynamin-like GTPase superfamily. IRG family.

It is found in the endoplasmic reticulum. The protein localises to the cytoplasmic vesicle membrane. It localises to the lipid droplet. It carries out the reaction GTP + H2O = GDP + phosphate + H(+). Immunity-related GTPase that plays important roles in host resistance to acute infection by protozoan, such as Toxoplasma gondii and Leishmania major. Acts as a dynamin-like protein that binds to intracellular membranes and promotes remodeling and trafficking of those membranes. Acts predominantly to restrict acute protozoan infection: expression is required in both hematopoietic and non-hematopoietic cellular compartments and is dependent on Stat1. Only plays a partial role in the control of latent Toxoplasma infection. Involved in the clearance of acute protozoan infections by regulating autophagy, possibly by promoting the fusion of phagosomes with lysosomes for efficient degradation of vacuoles containing parasites. Probably involved in membrane disruption of parasite-containing vacuoles. In addition to its role in resistance to acute infection by protozoan, also acts as a negative regulator of the integrated stress response (ISR) following coxsackievirus B3 infection. Promotes differentiation of activated CD8(+) T-cells. The protein is Immunity-related GTPase family M protein 3 of Mus musculus (Mouse).